We begin with the raw amino-acid sequence, 1040 residues long: Contactin-2 (1040 aa).

Residues Met-1 to Ser-30 form the signal peptide. Ig-like C2-type domains follow at residues Pro-39–Arg-130, Gln-135–Ser-224, Pro-241–Ile-324, Pro-329–Ala-413, Pro-419–Ser-506, and Thr-511–Leu-605. Disulfide bonds link Cys-63/Cys-113, Cys-157/Cys-209, Cys-263/Cys-308, and Cys-350/Cys-397. Asn-78, Asn-200, and Asn-206 each carry an N-linked (GlcNAc...) asparagine glycan. 4 N-linked (GlcNAc...) asparagine glycosylation sites follow: Asn-463, Asn-479, Asn-500, and Asn-527. Fibronectin type-III domains are found at residues Pro-612–Ala-710, Ala-715–Glu-812, Ala-817–Pro-913, and Pro-917–Thr-1008. N-linked (GlcNAc...) asparagine glycosylation is present at Asn-777. Positions Arg-796–Asp-798 match the Cell attachment site motif. 3 N-linked (GlcNAc...) asparagine glycosylation sites follow: Asn-832, Asn-920, and Asn-942. The disordered stretch occupies residues Gly-897 to Ser-922. A lipid anchor (GPI-anchor amidated serine) is attached at Ser-1014. Residues Ser-1015–Leu-1040 constitute a propeptide, removed in mature form.

It belongs to the immunoglobulin superfamily. Contactin family.

The protein resides in the cell membrane. In terms of biological role, in conjunction with another transmembrane protein, CNTNAP2, contributes to the organization of axonal domains at nodes of Ranvier by maintaining voltage-gated potassium channels at the juxtaparanodal region. The polypeptide is Contactin-2 (Cntn2) (Mus musculus (Mouse)).